The following is a 244-amino-acid chain: Phosphoribosylaminoimidazole-succinocarboxamide synthase (244 aa).

Belongs to the SAICAR synthetase family.

The catalysed reaction is 5-amino-1-(5-phospho-D-ribosyl)imidazole-4-carboxylate + L-aspartate + ATP = (2S)-2-[5-amino-1-(5-phospho-beta-D-ribosyl)imidazole-4-carboxamido]succinate + ADP + phosphate + 2 H(+). Its pathway is purine metabolism; IMP biosynthesis via de novo pathway; 5-amino-1-(5-phospho-D-ribosyl)imidazole-4-carboxamide from 5-amino-1-(5-phospho-D-ribosyl)imidazole-4-carboxylate: step 1/2. The polypeptide is Phosphoribosylaminoimidazole-succinocarboxamide synthase (Prochlorococcus marinus (strain SARG / CCMP1375 / SS120)).